A 310-amino-acid polypeptide reads, in one-letter code: Conjugation stage-specific protein (310 aa).

The protein belongs to the archaeal Rpo3/eukaryotic RPB3 RNA polymerase subunit family.

Its subcellular location is the nucleus. May be a stage-specific RNA polymerase subunit. This is Conjugation stage-specific protein (CNJC) from Tetrahymena thermophila.